The chain runs to 314 residues: 4-hydroxy-3-methylbut-2-enyl diphosphate reductase (314 aa).

Position 12 (C12) interacts with [4Fe-4S] cluster. Residues H41 and H74 each contribute to the (2E)-4-hydroxy-3-methylbut-2-enyl diphosphate site. H41 and H74 together coordinate dimethylallyl diphosphate. The isopentenyl diphosphate site is built by H41 and H74. C96 is a binding site for [4Fe-4S] cluster. H124 lines the (2E)-4-hydroxy-3-methylbut-2-enyl diphosphate pocket. H124 lines the dimethylallyl diphosphate pocket. Position 124 (H124) interacts with isopentenyl diphosphate. E126 serves as the catalytic Proton donor. Residue T167 participates in (2E)-4-hydroxy-3-methylbut-2-enyl diphosphate binding. [4Fe-4S] cluster is bound at residue C197. (2E)-4-hydroxy-3-methylbut-2-enyl diphosphate is bound by residues S225, S226, N227, and S269. The dimethylallyl diphosphate site is built by S225, S226, N227, and S269. Isopentenyl diphosphate is bound by residues S225, S226, N227, and S269.

Belongs to the IspH family. Requires [4Fe-4S] cluster as cofactor.

The enzyme catalyses isopentenyl diphosphate + 2 oxidized [2Fe-2S]-[ferredoxin] + H2O = (2E)-4-hydroxy-3-methylbut-2-enyl diphosphate + 2 reduced [2Fe-2S]-[ferredoxin] + 2 H(+). The catalysed reaction is dimethylallyl diphosphate + 2 oxidized [2Fe-2S]-[ferredoxin] + H2O = (2E)-4-hydroxy-3-methylbut-2-enyl diphosphate + 2 reduced [2Fe-2S]-[ferredoxin] + 2 H(+). The protein operates within isoprenoid biosynthesis; dimethylallyl diphosphate biosynthesis; dimethylallyl diphosphate from (2E)-4-hydroxy-3-methylbutenyl diphosphate: step 1/1. Its pathway is isoprenoid biosynthesis; isopentenyl diphosphate biosynthesis via DXP pathway; isopentenyl diphosphate from 1-deoxy-D-xylulose 5-phosphate: step 6/6. Functionally, catalyzes the conversion of 1-hydroxy-2-methyl-2-(E)-butenyl 4-diphosphate (HMBPP) into a mixture of isopentenyl diphosphate (IPP) and dimethylallyl diphosphate (DMAPP). Acts in the terminal step of the DOXP/MEP pathway for isoprenoid precursor biosynthesis. In Actinobacillus pleuropneumoniae serotype 7 (strain AP76), this protein is 4-hydroxy-3-methylbut-2-enyl diphosphate reductase.